A 318-amino-acid chain; its full sequence is Receptor homology region, transmembrane domain- and RING domain-containing protein 6 (318 aa).

The N-terminal stretch at 1–20 (MNGSWITILSLLVISQLASS) is a signal peptide. Over 22–162 (VTLIGKNTFL…LIPGFGISSW (141 aa)) the chain is Lumenal. Residues C62 and C87 are joined by a disulfide bond. The PA domain occupies 70 to 143 (EKGSKFRPSY…RTSGEVLKEY (74 aa)). N121 carries an N-linked (GlcNAc...) asparagine glycan. The helical transmembrane segment at 163 to 183 (SIMAITFVSLLVISAVLASYF) threads the bilayer. Residues 184–318 (SVRRHRIRQH…DLPIVVRVYL (135 aa)) lie on the Cytoplasmic side of the membrane. Residues 233–275 (CAICIDDYRVGEILRILPCKHKYHAVCIDSWLGRCRSFCPVCK) form an RING-type; atypical zinc finger.

It is found in the prevacuolar compartment membrane. It localises to the protein storage vacuole membrane. Its function is as follows. Involved in the trafficking of vacuolar proteins. May function as a sorting receptor for protein trafficking to the protein storage vacuole (PSV). The polypeptide is Receptor homology region, transmembrane domain- and RING domain-containing protein 6 (RMR6) (Arabidopsis thaliana (Mouse-ear cress)).